We begin with the raw amino-acid sequence, 360 residues long: Phospho-N-acetylmuramoyl-pentapeptide-transferase (360 aa).

Helical transmembrane passes span 21-41 (YVTF…LWWG), 74-94 (MGGL…GDLG), 97-117 (YVWV…IDDY), 135-155 (LLQS…ADTA), 168-188 (VMPQ…VGSS), 199-219 (GLAI…AYLS), 236-256 (AGEL…FLWF), 263-283 (VFMG…IAVL), 288-308 (ILLV…ILQV), and 338-358 (VIVR…ATLK).

It belongs to the glycosyltransferase 4 family. MraY subfamily. The cofactor is Mg(2+).

It is found in the cell inner membrane. The enzyme catalyses UDP-N-acetyl-alpha-D-muramoyl-L-alanyl-gamma-D-glutamyl-meso-2,6-diaminopimeloyl-D-alanyl-D-alanine + di-trans,octa-cis-undecaprenyl phosphate = di-trans,octa-cis-undecaprenyl diphospho-N-acetyl-alpha-D-muramoyl-L-alanyl-D-glutamyl-meso-2,6-diaminopimeloyl-D-alanyl-D-alanine + UMP. It participates in cell wall biogenesis; peptidoglycan biosynthesis. In terms of biological role, catalyzes the initial step of the lipid cycle reactions in the biosynthesis of the cell wall peptidoglycan: transfers peptidoglycan precursor phospho-MurNAc-pentapeptide from UDP-MurNAc-pentapeptide onto the lipid carrier undecaprenyl phosphate, yielding undecaprenyl-pyrophosphoryl-MurNAc-pentapeptide, known as lipid I. This Shewanella piezotolerans (strain WP3 / JCM 13877) protein is Phospho-N-acetylmuramoyl-pentapeptide-transferase.